The following is an 856-amino-acid chain: Alanine/arginine aminopeptidase (856 aa).

Residues glutamate 132 and 264 to 268 (GAMEN) each bind substrate. Histidine 300 is a Zn(2+) binding site. Residue glutamate 301 is the Proton acceptor of the active site. Zn(2+) contacts are provided by histidine 304 and glutamate 323.

The protein belongs to the peptidase M1 family. The cofactor is Zn(2+).

Its function is as follows. Positive effector of glycogen accumulation. May be involved in nutrient-sensing. The sequence is that of Alanine/arginine aminopeptidase (AAP1) from Saccharomyces cerevisiae (strain ATCC 204508 / S288c) (Baker's yeast).